The primary structure comprises 426 residues: D-tagatose-1,6-bisphosphate aldolase subunit KbaZ (426 aa).

Belongs to the GatZ/KbaZ family. KbaZ subfamily. As to quaternary structure, forms a complex with KbaY.

The protein operates within carbohydrate metabolism; D-tagatose 6-phosphate degradation; D-glyceraldehyde 3-phosphate and glycerone phosphate from D-tagatose 6-phosphate: step 2/2. Component of the tagatose-1,6-bisphosphate aldolase KbaYZ that is required for full activity and stability of the Y subunit. Could have a chaperone-like function for the proper and stable folding of KbaY. When expressed alone, KbaZ does not show any aldolase activity. The polypeptide is D-tagatose-1,6-bisphosphate aldolase subunit KbaZ (Escherichia coli O8 (strain IAI1)).